We begin with the raw amino-acid sequence, 317 residues long: tRNA uridine(34) hydroxylase (317 aa).

The 95-residue stretch at 123 to 217 folds into the Rhodanese domain; that stretch reads EDDDTIVIDA…YGKDPETKGE (95 aa). The Cysteine persulfide intermediate role is filled by cysteine 177.

The protein belongs to the TrhO family.

The enzyme catalyses uridine(34) in tRNA + AH2 + O2 = 5-hydroxyuridine(34) in tRNA + A + H2O. Catalyzes oxygen-dependent 5-hydroxyuridine (ho5U) modification at position 34 in tRNAs. The sequence is that of tRNA uridine(34) hydroxylase from Staphylococcus carnosus (strain TM300).